The chain runs to 192 residues: MMEVPREIIEKLEIFQKLVKKWNKSINLVSDNTIHNFWQRHILDSLQLIQYIDNKEIHLVDIGSGSGLPGIVLSIAGVAQVSLIEADLRKCIFLEKASKISNNNIQIINQRIEKVEIDCSILTCRAFSNLNTIFNCIKNISVREKFLLLKGKNYLTEIVEAKERWLFGYLIHQSITCEEGKILEVSNLTKMI.

Residues Gly-63, Leu-68, Ile-112 to Glu-113, and Arg-125 each bind S-adenosyl-L-methionine.

This sequence belongs to the methyltransferase superfamily. RNA methyltransferase RsmG family.

It is found in the cytoplasm. The enzyme catalyses guanosine(527) in 16S rRNA + S-adenosyl-L-methionine = N(7)-methylguanosine(527) in 16S rRNA + S-adenosyl-L-homocysteine. Functionally, specifically methylates the N7 position of guanine in position 527 of 16S rRNA. In Rickettsia africae (strain ESF-5), this protein is Ribosomal RNA small subunit methyltransferase G.